An 830-amino-acid chain; its full sequence is Adhesion G protein-coupled receptor E2 (830 aa).

A signal peptide spans 1 to 22 (MRHGHPRLLPGLLMLLLLPLGA). At 23–540 (AAQKTSGCAR…MAHYDVQEED (518 aa)) the chain is on the extracellular side. The EGF-like 1 domain maps to 26 to 68 (KTSGCARWCPPKSTCVNATTCRCSPGFSSLSGEIFSSPLESCD). Disulfide bonds link Cys-30–Cys-40, Cys-34–Cys-46, Cys-48–Cys-67, Cys-73–Cys-87, and Cys-81–Cys-96. The N-linked (GlcNAc...) asparagine glycan is linked to Asn-42. The EGF-like 1; calcium-binding domain maps to 69–108 (DIDECGPPPLVSCGRLADCQNTEGSYHCMCSPGYALASGA). N-linked (GlcNAc...) asparagine glycosylation occurs at Asn-113. An EGF-like 2; calcium-binding domain is found at 121 to 159 (DVDECQLKPRVCKSRGICTNTKGSYTCKCPPGFELNLGD). Cystine bridges form between Cys-125–Cys-138, Cys-132–Cys-147, Cys-169–Cys-182, Cys-176–Cys-191, Cys-218–Cys-231, and Cys-225–Cys-240. The region spanning 165-203 (DVNECTSGQNPCHNSTHCLNNIGGYECRCRPGWKPVPGS) is the EGF-like 3; calcium-binding domain. Asn-178 carries N-linked (GlcNAc...) asparagine glycosylation. Positions 214–253 (DVDECSSGKHTCHYSTVCINTVGSYKCRCRRGWKPKPRFQ) constitute an EGF-like 4; calcium-binding domain. N-linked (GlcNAc...) asparagine glycans are attached at residues Asn-258, Asn-348, Asn-361, and Asn-379. In terms of domain architecture, GAIN-B spans 358 to 537 (WTFNASAGTD…AVLMAHYDVQ (180 aa)). 2 cysteine pairs are disulfide-bonded: Cys-489/Cys-519 and Cys-507/Cys-521. Positions 489–537 (CVFWEHSQDECGHWSTRGCTVVDSGDTSTTCQCTHLSSFAVLMAHYDVQ) are GPS. The helical transmembrane segment at 541–561 (LVLPVITYVGLGLSLLCLLLA) threads the bilayer. The Cytoplasmic segment spans residues 562-576 (ALTFLLCKAIQNTST). A helical transmembrane segment spans residues 577–597 (SLHLQLLICLFLAHLLFLMAI). Residues 598-603 (DRTEIK) are Extracellular-facing. A helical transmembrane segment spans residues 604 to 624 (VLCSIIAGALHYLYLASFTWM). The Cytoplasmic portion of the chain corresponds to 625-651 (LLEGLHLFLTARNLMVVNYSSVSMLMK). Residues 652–672 (KLMYPVGYGVPTLIVAISAAS) traverse the membrane as a helical segment. Over 673–690 (RSHLYGTRTRCWLNPEER) the chain is Extracellular. Residues 691 to 711 (FIWSFLGPVCTIFSVNLGFFL) form a helical membrane-spanning segment. Over 712–744 (MTLWILKSKLSSLNSDVSTLQNTRMLTFKAIAQ) the chain is Cytoplasmic. The helical transmembrane segment at 745 to 765 (LFILGCTWCLGILQVGPAAHV) threads the bilayer. The Extracellular segment spans residues 766 to 767 (MA). Residues 768 to 788 (YLFTIINSLQGVFIFLVYCLL) form a helical membrane-spanning segment. At 789 to 830 (SQQVREEYGKWFKGIRKTRAESEKYTLSSRAMSDVNKPMMVN) the chain is on the cytoplasmic side.

The protein belongs to the G-protein coupled receptor 2 family. Adhesion G-protein coupled receptor (ADGR) subfamily. Forms a heterodimer, consisting of a large extracellular region non-covalently linked to a seven-transmembrane moiety. Interacts with chondroitin sulfate; the interaction with chondroitin sulfate is calcium-dependent. Interacts with CD55. In terms of processing, autoproteolytically cleaved into 2 subunits, an extracellular alpha subunit and a seven-transmembrane beta subunit.

It is found in the cell membrane. It localises to the cell projection. The protein localises to the ruffle membrane. Its function is as follows. Cell surface receptor that binds to the chondroitin sulfate moiety of glycosaminoglycan chains and promotes cell attachment. Promotes granulocyte chemotaxis, degranulation and adhesion. In macrophages, promotes the release of inflammatory cytokines, including IL8 and TNF. Signals probably through G-proteins. This is Adhesion G protein-coupled receptor E2 (ADGRE2) from Canis lupus familiaris (Dog).